A 161-amino-acid chain; its full sequence is MTKGPVRLDVAVSYALPRAGLPSAVSFRKWVAAALKGRIREADLAVRVVDEKEGCSLNHHYRGKDYATNVLSFPAELPEGLPKGIKMPLLGDLVICAPVVAREAAEQGKLLAAHYAHLTVHGTLHLLGWDHEDDKEAEAMEQLEREILADLGIDDPYAGEH.

His121, His125, and His131 together coordinate Zn(2+).

It belongs to the endoribonuclease YbeY family. It depends on Zn(2+) as a cofactor.

The protein resides in the cytoplasm. Single strand-specific metallo-endoribonuclease involved in late-stage 70S ribosome quality control and in maturation of the 3' terminus of the 16S rRNA. This chain is Endoribonuclease YbeY, found in Xanthomonas euvesicatoria pv. vesicatoria (strain 85-10) (Xanthomonas campestris pv. vesicatoria).